The sequence spans 81 residues: Putative phytosulfokines 6 (81 aa).

The first 20 residues, 1–20 (MKQSLCLAVLFLILSTSSSA), serve as a signal peptide directing secretion. The propeptide occupies 21–72 (IRRGKEDQEINPLVSATSVEEDSVNKLMGMEYCGEGDEECLRRRMMTESHLD). 2 positions are modified to sulfotyrosine: tyrosine 73 and tyrosine 75. A propeptide spanning residues 78-81 (HHKH) is cleaved from the precursor.

Belongs to the phytosulfokine family. Post-translationally, sulfation is important for activity and for the binding to a putative membrane receptor. In terms of processing, PSK-beta is an enzymatic derivative of PSK-alpha. Expressed in roots, leaves, stems, flowers and siliques. Most abundant in vascular bundles and in root tips.

The protein localises to the secreted. In terms of biological role, promotes plant cell differentiation, organogenesis and somatic embryogenesis as well as cell proliferation. The protein is Putative phytosulfokines 6 (PSK6) of Arabidopsis thaliana (Mouse-ear cress).